Reading from the N-terminus, the 566-residue chain is Medium-chain fatty-acid--CoA ligase (566 aa).

ATP is bound at residue 231–242 (ILASERAYCARL).

This sequence belongs to the ATP-dependent AMP-binding enzyme family. Homodimer. Mg(2+) is required as a cofactor.

It is found in the cell membrane. The enzyme catalyses hexanoate + ATP + CoA = hexanoyl-CoA + AMP + diphosphate. It carries out the reaction octanoate + ATP + CoA = octanoyl-CoA + AMP + diphosphate. It catalyses the reaction dodecanoate + ATP + CoA = dodecanoyl-CoA + AMP + diphosphate. It participates in lipid metabolism; fatty acid beta-oxidation. Catalyzes the esterification, concomitant with transport, of exogenous fatty acids into metabolically active CoA thioesters for subsequent degradation or incorporation into phospholipids. Is maximally active on C6:0, C8:0 and C12:0 fatty acids, while has a low activity on C14-C18 chain length fatty acids. Is involved in the anaerobic beta-oxidative degradation of fatty acids, which allows anaerobic growth of E.coli on fatty acids as a sole carbon and energy source in the presence of nitrate or fumarate as a terminal electron acceptor. Can functionally replace FadD under anaerobic conditions. The chain is Medium-chain fatty-acid--CoA ligase from Escherichia coli (strain K12).